Consider the following 300-residue polypeptide: Hairy/enhancer-of-split related with YRPW motif protein 1 (300 aa).

The disordered stretch occupies residues 1-52 (MKRGHDYSSSDSELDENIEVEKESADENGNLSSAAGSMSPSTSSQILARKRR). The span at 32-44 (SSAAGSMSPSTSS) shows a compositional bias: low complexity. The 56-residue stretch at 48 to 103 (ARKRRRGIIEKRRRDRINNSLSELRRLVPSAFEKQGSAKLEKAEILQMTVDHLKML) folds into the bHLH domain. The Orange domain occupies 121–157 (YRSLGFRECLAEVARYLSIIEGMDTTDPLRVRLVSHL). Residues 199–210 (AHTSANSTSSST) show a composition bias toward low complexity. Disordered regions lie at residues 199 to 232 (AHTS…LRVP) and 278 to 300 (LSPT…IGAF). Residues 290 to 293 (YRPW) carry the YRPW motif motif.

The protein belongs to the HEY family. Efficient DNA binding requires dimerization with another bHLH protein. Binds DNA in the form of homodimer or more strongly as a heterodimer with hes1/hairy1 or hes4/hairy2b. Also weakly interacts with the bHLH proteins hes2, neurod1 and neurod4/ath3. Interacts (via Orange domain) with ccdc89/boip (via C-terminus).

It localises to the nucleus. Its function is as follows. Downstream effector of Notch signaling. Transcriptional repressor which binds preferentially to the canonical E box sequence 5'-CACGTG-3'. Acts as a suppressor of neurogenesis by antagonizing proneural gene function. Functions during floorplate development. Plays a role in pronephros formation in the inhibition of distal tubule and duct cell fates and the promotion of glomus and proximal tubule formation. The sequence is that of Hairy/enhancer-of-split related with YRPW motif protein 1 (hey1) from Xenopus tropicalis (Western clawed frog).